Here is a 129-residue protein sequence, read N- to C-terminus: Small ribosomal subunit protein uS8 (129 aa).

The protein belongs to the universal ribosomal protein uS8 family. In terms of assembly, part of the 30S ribosomal subunit. Contacts proteins S5 and S12.

In terms of biological role, one of the primary rRNA binding proteins, it binds directly to 16S rRNA central domain where it helps coordinate assembly of the platform of the 30S subunit. The polypeptide is Small ribosomal subunit protein uS8 (Bdellovibrio bacteriovorus (strain ATCC 15356 / DSM 50701 / NCIMB 9529 / HD100)).